A 382-amino-acid chain; its full sequence is 3-dehydroquinate synthase (382 aa).

Residues 81-86, 115-119, 139-140, K152, and K161 contribute to the NAD(+) site; these read EGEISK, GVVGD, and TS. Residues E194, H256, and H274 each coordinate Zn(2+).

The protein belongs to the sugar phosphate cyclases superfamily. Dehydroquinate synthase family. The cofactor is NAD(+). Requires Co(2+) as cofactor. Zn(2+) serves as cofactor.

It is found in the cytoplasm. The enzyme catalyses 7-phospho-2-dehydro-3-deoxy-D-arabino-heptonate = 3-dehydroquinate + phosphate. It participates in metabolic intermediate biosynthesis; chorismate biosynthesis; chorismate from D-erythrose 4-phosphate and phosphoenolpyruvate: step 2/7. Its function is as follows. Catalyzes the conversion of 3-deoxy-D-arabino-heptulosonate 7-phosphate (DAHP) to dehydroquinate (DHQ). This is 3-dehydroquinate synthase from Bradyrhizobium diazoefficiens (strain JCM 10833 / BCRC 13528 / IAM 13628 / NBRC 14792 / USDA 110).